The chain runs to 465 residues: Hexokinase-4 (465 aa).

The Hexokinase domain occupies 10–454 (AAKKEKVEQI…SGRGAALVSA (445 aa)). The hexokinase small subdomain stretch occupies residues 67–203 (EGSEVGDFLS…DFEMDVVAMV (137 aa)). An ATP-binding site is contributed by 78 to 83 (DLGGTN). Substrate-binding positions include 151–152 (SF), 168–169 (TK), and 204–205 (ND). The segment at 204–443 (NDTVATMISC…CEITFIESEE (240 aa)) is hexokinase large subdomain. T228 is a binding site for ATP. The substrate site is built by N231, E256, and E290. Residues 295–296 (GK), 332–336 (TRFVS), and 411–415 (SVYKL) each bind ATP.

The protein belongs to the hexokinase family. In terms of assembly, monomer. Interacts with MIDN; the interaction occurs preferentially at low glucose levels and results in inhibition of hexokinase activity. Interacts with GCKR; leading to sequestration in the nucleus.

It is found in the cytoplasm. Its subcellular location is the nucleus. The protein localises to the mitochondrion. The enzyme catalyses a D-hexose + ATP = a D-hexose 6-phosphate + ADP + H(+). It catalyses the reaction D-fructose + ATP = D-fructose 6-phosphate + ADP + H(+). The catalysed reaction is D-glucose + ATP = D-glucose 6-phosphate + ADP + H(+). It carries out the reaction D-mannose + ATP = D-mannose 6-phosphate + ADP + H(+). It participates in carbohydrate metabolism; hexose metabolism. Its pathway is carbohydrate degradation; glycolysis; D-glyceraldehyde 3-phosphate and glycerone phosphate from D-glucose: step 1/4. With respect to regulation, subject to allosteric regulation. Low glucose and high fructose-6-phosphate triggers association with the inhibitor GCKR followed by sequestration in the nucleus. Functionally, catalyzes the phosphorylation of hexose, such as D-glucose, D-fructose and D-mannose, to hexose 6-phosphate (D-glucose 6-phosphate, D-fructose 6-phosphate and D-mannose 6-phosphate, respectively). Compared to other hexokinases, has a weak affinity for D-glucose, and is effective only when glucose is abundant. Mainly expressed in pancreatic beta cells and the liver and constitutes a rate-limiting step in glucose metabolism in these tissues. Since insulin secretion parallels glucose metabolism and the low glucose affinity of GCK ensures that it can change its enzymatic activity within the physiological range of glucose concentrations, GCK acts as a glucose sensor in the pancreatic beta cell. In pancreas, plays an important role in modulating insulin secretion. In liver, helps to facilitate the uptake and conversion of glucose by acting as an insulin-sensitive determinant of hepatic glucose usage. Required to provide D-glucose 6-phosphate for the synthesis of glycogen. Mediates the initial step of glycolysis by catalyzing phosphorylation of D-glucose to D-glucose 6-phosphate. This chain is Hexokinase-4, found in Homo sapiens (Human).